We begin with the raw amino-acid sequence, 248 residues long: Putative glutamine amidotransferase-like protein C13C5.04 (248 aa).

The Glutamine amidotransferase type-1 domain maps to 13–217 (PMVEITSAYG…VKVLRGTEVF (205 aa)).

This is Putative glutamine amidotransferase-like protein C13C5.04 from Schizosaccharomyces pombe (strain 972 / ATCC 24843) (Fission yeast).